Reading from the N-terminus, the 835-residue chain is Lon protease (835 aa).

Residues 4 to 224 (LPYIAIRNQL…LAINMLINAI (221 aa)) form the Lon N-terminal domain. 412 to 419 (GPPGTGKT) provides a ligand contact to ATP. A Lon proteolytic domain is found at 649–832 (QPKAGVVNAL…DEIFKYIFEA (184 aa)). Active-site residues include S738 and K781.

Belongs to the peptidase S16 family. Homohexamer. Organized in a ring with a central cavity.

It localises to the cytoplasm. It catalyses the reaction Hydrolysis of proteins in presence of ATP.. Its function is as follows. ATP-dependent serine protease that mediates the selective degradation of mutant and abnormal proteins as well as certain short-lived regulatory proteins. Required for cellular homeostasis and for survival from DNA damage and developmental changes induced by stress. Degrades polypeptides processively to yield small peptide fragments that are 5 to 10 amino acids long. Binds to DNA in a double-stranded, site-specific manner. The protein is Lon protease of Metamycoplasma arthritidis (strain 158L3-1) (Mycoplasma arthritidis).